The chain runs to 518 residues: Chromosomal replication initiator protein DnaA (518 aa).

Residues 1–72 form a domain I, interacts with DnaA modulators region; sequence MNEFWQHCSA…DLARDFWHSP (72 aa). Residues 72 to 181 are domain II; that stretch reads PVDVQFVLDP…GESDSTYERS (110 aa). A disordered region spans residues 155–178; sequence AAARRTWRPGAAAQAAGGESDSTY. The domain III, AAA+ region stretch occupies residues 182-398; sequence KLNPVLTFDN…GALRKILAYS (217 aa). ATP is bound by residues glycine 226, glycine 228, lysine 229, and threonine 230. The segment at 399–518 is domain IV, binds dsDNA; the sequence is KFHGREITIE…LHVLEQTLKG (120 aa).

This sequence belongs to the DnaA family. As to quaternary structure, oligomerizes as a right-handed, spiral filament on DNA at oriC.

It is found in the cytoplasm. Functionally, plays an essential role in the initiation and regulation of chromosomal replication. ATP-DnaA binds to the origin of replication (oriC) to initiate formation of the DNA replication initiation complex once per cell cycle. Binds the DnaA box (a 9 base pair repeat at the origin) and separates the double-stranded (ds)DNA. Forms a right-handed helical filament on oriC DNA; dsDNA binds to the exterior of the filament while single-stranded (ss)DNA is stabiized in the filament's interior. The ATP-DnaA-oriC complex binds and stabilizes one strand of the AT-rich DNA unwinding element (DUE), permitting loading of DNA polymerase. After initiation quickly degrades to an ADP-DnaA complex that is not apt for DNA replication. Binds acidic phospholipids. This Paraburkholderia phymatum (strain DSM 17167 / CIP 108236 / LMG 21445 / STM815) (Burkholderia phymatum) protein is Chromosomal replication initiator protein DnaA.